The following is a 480-amino-acid chain: ATP synthase subunit beta (480 aa).

153 to 160 (GGAGVGKT) contacts ATP.

Belongs to the ATPase alpha/beta chains family. F-type ATPases have 2 components, CF(1) - the catalytic core - and CF(0) - the membrane proton channel. CF(1) has five subunits: alpha(3), beta(3), gamma(1), delta(1), epsilon(1). CF(0) has three main subunits: a(1), b(2) and c(9-12). The alpha and beta chains form an alternating ring which encloses part of the gamma chain. CF(1) is attached to CF(0) by a central stalk formed by the gamma and epsilon chains, while a peripheral stalk is formed by the delta and b chains.

It is found in the cell membrane. The catalysed reaction is ATP + H2O + 4 H(+)(in) = ADP + phosphate + 5 H(+)(out). Functionally, produces ATP from ADP in the presence of a proton gradient across the membrane. The catalytic sites are hosted primarily by the beta subunits. This chain is ATP synthase subunit beta, found in Lactobacillus johnsonii (strain CNCM I-12250 / La1 / NCC 533).